The primary structure comprises 299 residues: Tyrosine recombinase XerC (299 aa).

The region spanning 1–85 (MKRQLEAYCA…AVRGLYRYLN (85 aa)) is the Core-binding (CB) domain. Residues 106 to 285 (RLPKVLDTDR…DFQHLAAVYD (180 aa)) form the Tyr recombinase domain. Residues Arg-146, Lys-170, His-237, Arg-240, and His-263 contribute to the active site. The active-site O-(3'-phospho-DNA)-tyrosine intermediate is Tyr-272.

It belongs to the 'phage' integrase family. XerC subfamily. In terms of assembly, forms a cyclic heterotetrameric complex composed of two molecules of XerC and two molecules of XerD.

It localises to the cytoplasm. In terms of biological role, site-specific tyrosine recombinase, which acts by catalyzing the cutting and rejoining of the recombining DNA molecules. The XerC-XerD complex is essential to convert dimers of the bacterial chromosome into monomers to permit their segregation at cell division. It also contributes to the segregational stability of plasmids. The sequence is that of Tyrosine recombinase XerC from Pseudomonas putida (strain ATCC 700007 / DSM 6899 / JCM 31910 / BCRC 17059 / LMG 24140 / F1).